Consider the following 359-residue polypeptide: MTRLTLALDVMGGDFGPSVTVPAALQALNANSQLTLLLVGNPDIITPLLAKADFEQRSRLQIIPAQSVVASDARPSQAIRASRGTSMRVALELVKEGRAEACVSAGNTGALMGLAKLLLKPLEGIERPALVTVLPHQQKGKTVVLDLGANVDCDSTMLVQFAVMGAVLAEEVVGIKNPRVALLNIGEEETKGLDSIREASLMLKTVPTINYIGYLEANELLTGKTDVLVCDGFTGNVTLKTMEGVVRMFLSLLKSQGEGKKRSWWLLLLKRWLQKSLTRRFSHLNPDQYNGACLLGLRGTVIKSHGAANQRAFAVAIEQAVQAVQRQVPQRIAARLESVYPAGFEPLDDGKGVNLRAHR.

It belongs to the PlsX family. In terms of assembly, homodimer. Probably interacts with PlsY.

Its subcellular location is the cytoplasm. It catalyses the reaction a fatty acyl-[ACP] + phosphate = an acyl phosphate + holo-[ACP]. The protein operates within lipid metabolism; phospholipid metabolism. Functionally, catalyzes the reversible formation of acyl-phosphate (acyl-PO(4)) from acyl-[acyl-carrier-protein] (acyl-ACP). This enzyme utilizes acyl-ACP as fatty acyl donor, but not acyl-CoA. The polypeptide is Phosphate acyltransferase (Salmonella heidelberg (strain SL476)).